We begin with the raw amino-acid sequence, 520 residues long: GMP synthase [glutamine-hydrolyzing] (520 aa).

The Glutamine amidotransferase type-1 domain maps to 13-205 (KIIVLDYGSQ…ALNICKAKGD (193 aa)). The Nucleophile role is filled by Cys-90. Catalysis depends on residues His-179 and Glu-181. The GMPS ATP-PPase domain maps to 206 to 395 (WSMDNFIDMQ…LGMPDHIVWR (190 aa)). Residue 233–239 (SGGVDSS) coordinates ATP.

Homodimer.

It catalyses the reaction XMP + L-glutamine + ATP + H2O = GMP + L-glutamate + AMP + diphosphate + 2 H(+). Its pathway is purine metabolism; GMP biosynthesis; GMP from XMP (L-Gln route): step 1/1. Catalyzes the synthesis of GMP from XMP. The sequence is that of GMP synthase [glutamine-hydrolyzing] from Streptococcus pneumoniae (strain CGSP14).